Reading from the N-terminus, the 138-residue chain is Large ribosomal subunit protein uL16 (138 aa).

Belongs to the universal ribosomal protein uL16 family. In terms of assembly, part of the 50S ribosomal subunit.

In terms of biological role, binds 23S rRNA and is also seen to make contacts with the A and possibly P site tRNAs. The polypeptide is Large ribosomal subunit protein uL16 (Chlamydia felis (strain Fe/C-56) (Chlamydophila felis)).